Here is a 92-residue protein sequence, read N- to C-terminus: Small ribosomal subunit protein uS19 (92 aa).

Belongs to the universal ribosomal protein uS19 family.

In terms of biological role, protein S19 forms a complex with S13 that binds strongly to the 16S ribosomal RNA. The polypeptide is Small ribosomal subunit protein uS19 (Hyphomonas neptunium (strain ATCC 15444)).